Consider the following 345-residue polypeptide: Protein GAMETE CELL DEFECTIVE 1, mitochondrial (345 aa).

Residues 1 to 43 (MLALRKTLLHGRLPAAPPAAAAAAIASRIPALLRRLSSSPGDG) constitute a mitochondrion transit peptide. A disordered region spans residues 36–81 (LSSSPGDGQGGDEWGSSWSTGITKEHFDGSDAAVGRPVTSPSKPVS).

As to expression, expressed in roots, stems, leaves and florets.

Its subcellular location is the mitochondrion. Essential for fertility (male and female gametophyte functions and development). Required for the integrity of female gametic mitochondria. Involved in embryo apical-basal patterning, and particularly dorsal-ventral patterning, during early embryogenesis, and endosperm free nucleus positioning and development as well as early endosperm development, probably by modulating the expression pattern of related genes (e.g. AL1, MYB3/AL2, CYP78A13/GE, PNH1, HAZ1, MPK6 and OSH1). Has function in triggering of endosperm programmed cell death (PCD) leading to syncytial endosperm cellularization and starchy endosperm cell maturation. Implicated in central vacuole dynamics necessary for microspore development leading to pollen production, and for pollen development and germination. The polypeptide is Protein GAMETE CELL DEFECTIVE 1, mitochondrial (Oryza sativa subsp. japonica (Rice)).